Consider the following 377-residue polypeptide: Probable transposase for insertion sequence element IS5377 (377 aa).

Belongs to the transposase 11 family.

This is Probable transposase for insertion sequence element IS5377 from Geobacillus stearothermophilus (Bacillus stearothermophilus).